We begin with the raw amino-acid sequence, 138 residues long: ATP synthase epsilon chain (138 aa).

It belongs to the ATPase epsilon chain family. F-type ATPases have 2 components, CF(1) - the catalytic core - and CF(0) - the membrane proton channel. CF(1) has five subunits: alpha(3), beta(3), gamma(1), delta(1), epsilon(1). CF(0) has three main subunits: a, b and c.

It is found in the cell membrane. Its function is as follows. Produces ATP from ADP in the presence of a proton gradient across the membrane. In Polynucleobacter asymbioticus (strain DSM 18221 / CIP 109841 / QLW-P1DMWA-1) (Polynucleobacter necessarius subsp. asymbioticus), this protein is ATP synthase epsilon chain.